A 199-amino-acid polypeptide reads, in one-letter code: Probable nicotinate-nucleotide adenylyltransferase (199 aa).

Belongs to the NadD family.

It catalyses the reaction nicotinate beta-D-ribonucleotide + ATP + H(+) = deamido-NAD(+) + diphosphate. It participates in cofactor biosynthesis; NAD(+) biosynthesis; deamido-NAD(+) from nicotinate D-ribonucleotide: step 1/1. In terms of biological role, catalyzes the reversible adenylation of nicotinate mononucleotide (NaMN) to nicotinic acid adenine dinucleotide (NaAD). The polypeptide is Probable nicotinate-nucleotide adenylyltransferase (Roseobacter denitrificans (strain ATCC 33942 / OCh 114) (Erythrobacter sp. (strain OCh 114))).